A 613-amino-acid chain; its full sequence is Coiled-coil domain-containing protein 116 (613 aa).

The interval 41–68 (KPGRVPHPPSTCGSSALQGQRRNKRHPQ) is disordered. The segment covering 51-60 (TCGSSALQGQ) has biased composition (polar residues). Residues 79-104 (ESQVLDSLETVVEKATERMAAMKTEA) adopt a coiled-coil conformation. 3 disordered regions span residues 329 to 395 (CRDG…AQVA), 509 to 541 (RQAS…QATE), and 565 to 613 (MSAC…EDGV). At Ser386 the chain carries Phosphoserine. Positions 512-539 (SRLSTSHCSTETPSVQQEPATHTAQDQA) are enriched in polar residues. Over residues 577–589 (KSKDMDNEGRDKA) the composition is skewed to basic and acidic residues. Residues 590 to 613 (EIEDEDEDEFKDEDQDEDKDEDGV) show a composition bias toward acidic residues.

The protein resides in the cytoplasm. Its subcellular location is the cytoskeleton. The protein localises to the microtubule organizing center. It localises to the centrosome. This chain is Coiled-coil domain-containing protein 116 (CCDC116), found in Homo sapiens (Human).